The sequence spans 429 residues: Protein cereblon (429 aa).

A disordered region spans residues 1–30; that stretch reads MGNHLPLLPAESEEEDEMEVEDQDSKEAKK. Residues 11 to 22 show a composition bias toward acidic residues; the sequence is ESEEEDEMEVED. At S12 the chain carries Phosphoserine. The Lon N-terminal domain maps to 68-306; that stretch reads IPVLPQVMMI…CELDIMNKCT (239 aa). Positions 305–413 constitute a CULT domain; sequence CTSLCCKQCQ…LTRSALLPTI (109 aa). Zn(2+)-binding residues include C310 and C313. Residues H365, W367, and W373 each contribute to the (S)-thalidomide site. Zn(2+)-binding residues include C378 and C381.

Belongs to the CRBN family. As to quaternary structure, component of a DCX (DDB1-CUL4-X-box) protein ligase complex, at least composed of CRBN, CUL4A, DDB1 and RBX1. Interacts directly with DDB1. Interacts with KCNT1. Interacts with ILF2. Interacts with TRAF6 and ECSIT. Ubiquitinated, ubiquitination is mediated by its own DCX protein ligase complex.

The protein resides in the cytoplasm. It localises to the nucleus. Its subcellular location is the membrane. It functions in the pathway protein modification; protein ubiquitination. In terms of biological role, substrate recognition component of a DCX (DDB1-CUL4-X-box) E3 protein ligase complex that mediates the ubiquitination and subsequent proteasomal degradation of target proteins, such as MEIS2, ILF2 or GLUL. Normal degradation of key regulatory proteins is required for normal limb outgrowth and expression of the fibroblast growth factor FGF8. Maintains presynaptic glutamate release and consequently cognitive functions, such as memory and learning, by negatively regulating large-conductance calcium-activated potassium (BK) channels in excitatory neurons. Likely to function by regulating the assembly and neuronal surface expression of BK channels via its interaction with KCNT1. May also be involved in regulating anxiety-like behaviors via a BK channel-independent mechanism. Plays a negative role in TLR4 signaling by interacting with TRAF6 and ECSIT, leading to inhibition of ECSIT ubiquitination, an important step of the signaling. The sequence is that of Protein cereblon (CRBN) from Pongo abelii (Sumatran orangutan).